The following is a 549-amino-acid chain: Cation/acetate symporter ActP (549 aa).

Helical transmembrane passes span 33 to 53 (WQAIVMFLIFVVFTLGITYWA), 77 to 97 (LAIAGDYMSAASFLGISALVF), 103 to 123 (GLIYSLGFLVGWPIILFLIAE), 148 to 168 (ILSACGSLVVVALYLIAQMVG), 183 to 203 (IAVVLVGVLMMMYVLFGGMLA), 206 to 226 (WVQIIKAVLLLFGASFMAFMV), 262 to 282 (ISALSLGLGLMFGTAGLPHIL), 303 to 323 (GFMGYFYILTFIIGFGAIMLV), 355 to 375 (LFLGFISAVAFATILAVVAGL), 404 to 424 (VSKITVLVLGVIAIILGVLFE), 428 to 448 (IAFMVGLAFAIAASCNFPIIL), 464 to 484 (GGWLGLVTAVVLMVLGPTIWV), and 493 to 513 (IFPYEYPALFSISVAFIGIWF).

Belongs to the sodium:solute symporter (SSF) (TC 2.A.21) family.

The protein resides in the cell inner membrane. Functionally, transports acetate. The protein is Cation/acetate symporter ActP of Citrobacter koseri (strain ATCC BAA-895 / CDC 4225-83 / SGSC4696).